Here is a 338-residue protein sequence, read N- to C-terminus: Glycerol-3-phosphate dehydrogenase [NAD(P)+] (338 aa).

The NADPH site is built by S13, W14, and K108. The sn-glycerol 3-phosphate site is built by K108, G139, and S141. A143 is an NADPH binding site. 5 residues coordinate sn-glycerol 3-phosphate: K194, D247, S257, R258, and N259. K194 serves as the catalytic Proton acceptor. R258 lines the NADPH pocket. NADPH-binding residues include V282 and E284.

The protein belongs to the NAD-dependent glycerol-3-phosphate dehydrogenase family.

The protein resides in the cytoplasm. The catalysed reaction is sn-glycerol 3-phosphate + NAD(+) = dihydroxyacetone phosphate + NADH + H(+). It carries out the reaction sn-glycerol 3-phosphate + NADP(+) = dihydroxyacetone phosphate + NADPH + H(+). It participates in membrane lipid metabolism; glycerophospholipid metabolism. Its function is as follows. Catalyzes the reduction of the glycolytic intermediate dihydroxyacetone phosphate (DHAP) to sn-glycerol 3-phosphate (G3P), the key precursor for phospholipid synthesis. The polypeptide is Glycerol-3-phosphate dehydrogenase [NAD(P)+] (Streptococcus agalactiae serotype V (strain ATCC BAA-611 / 2603 V/R)).